Consider the following 237-residue polypeptide: MNIKDIGVIIAKKPLKENTFIITVFTKNHGLYSGVVKEFSKKSKFIYQEGNIIDFLWQARLHEHIGMAKCELIKSYTGYFITNKTKLYAFNSVISLIKELFHEREEHSKFFSFLINYLDNLSKHFCFRDYINFELALLAETGYKLDLTKCGVSHVTTDLIYVSPKSARALSYEVGKPYKDKLLMLPRFLLSDNSEITLEEKRQALALTNYFFNRYLFHNNRQVEARQTFIEYTLNNF.

This sequence belongs to the RecO family.

Functionally, involved in DNA repair and RecF pathway recombination. The polypeptide is DNA repair protein RecO (Rickettsia rickettsii (strain Iowa)).